We begin with the raw amino-acid sequence, 507 residues long: Cobyric acid synthase (507 aa).

Positions 259–456 (EIQIAVIKLP…LHGIFDNGTW (198 aa)) constitute a GATase cobBQ-type domain. The Nucleophile role is filled by Cys340. His448 is a catalytic residue.

Belongs to the CobB/CobQ family. CobQ subfamily.

The protein operates within cofactor biosynthesis; adenosylcobalamin biosynthesis. In terms of biological role, catalyzes amidations at positions B, D, E, and G on adenosylcobyrinic A,C-diamide. NH(2) groups are provided by glutamine, and one molecule of ATP is hydrogenolyzed for each amidation. The protein is Cobyric acid synthase of Prochlorococcus marinus (strain SARG / CCMP1375 / SS120).